A 366-amino-acid polypeptide reads, in one-letter code: Chorismate synthase (366 aa).

The NADP(+) site is built by Arg-48 and Arg-54. Residues 125-127, 238-239, Gly-278, 293-297, and Arg-319 contribute to the FMN site; these read RSS, NA, and KPTSS.

Belongs to the chorismate synthase family. Homotetramer. Requires FMNH2 as cofactor.

It catalyses the reaction 5-O-(1-carboxyvinyl)-3-phosphoshikimate = chorismate + phosphate. It participates in metabolic intermediate biosynthesis; chorismate biosynthesis; chorismate from D-erythrose 4-phosphate and phosphoenolpyruvate: step 7/7. Its function is as follows. Catalyzes the anti-1,4-elimination of the C-3 phosphate and the C-6 proR hydrogen from 5-enolpyruvylshikimate-3-phosphate (EPSP) to yield chorismate, which is the branch point compound that serves as the starting substrate for the three terminal pathways of aromatic amino acid biosynthesis. This reaction introduces a second double bond into the aromatic ring system. The chain is Chorismate synthase from Neisseria meningitidis serogroup A / serotype 4A (strain DSM 15465 / Z2491).